Reading from the N-terminus, the 331-residue chain is Ketol-acid reductoisomerase (NADP(+)) (331 aa).

In terms of domain architecture, KARI N-terminal Rossmann spans A2 to T182. Residues Y25–Q28, S51, S53, and D83–Q86 contribute to the NADP(+) site. H108 is an active-site residue. G134 serves as a coordination point for NADP(+). Residues N183–L328 enclose the KARI C-terminal knotted domain. Mg(2+)-binding residues include D191, E195, E227, and E231. Position 252 (S252) interacts with substrate.

It belongs to the ketol-acid reductoisomerase family. Mg(2+) is required as a cofactor.

It carries out the reaction (2R)-2,3-dihydroxy-3-methylbutanoate + NADP(+) = (2S)-2-acetolactate + NADPH + H(+). It catalyses the reaction (2R,3R)-2,3-dihydroxy-3-methylpentanoate + NADP(+) = (S)-2-ethyl-2-hydroxy-3-oxobutanoate + NADPH + H(+). Its pathway is amino-acid biosynthesis; L-isoleucine biosynthesis; L-isoleucine from 2-oxobutanoate: step 2/4. It participates in amino-acid biosynthesis; L-valine biosynthesis; L-valine from pyruvate: step 2/4. Involved in the biosynthesis of branched-chain amino acids (BCAA). Catalyzes an alkyl-migration followed by a ketol-acid reduction of (S)-2-acetolactate (S2AL) to yield (R)-2,3-dihydroxy-isovalerate. In the isomerase reaction, S2AL is rearranged via a Mg-dependent methyl migration to produce 3-hydroxy-3-methyl-2-ketobutyrate (HMKB). In the reductase reaction, this 2-ketoacid undergoes a metal-dependent reduction by NADPH to yield (R)-2,3-dihydroxy-isovalerate. The sequence is that of Ketol-acid reductoisomerase (NADP(+)) from Parasynechococcus marenigrum (strain WH8102).